The chain runs to 239 residues: DNA oxidative demethylase ALKBH2 (239 aa).

A PCNA-binding motif is present at residues 3–7 (KFLVR). Positions 11 to 32 (RDLQGGGEEPAPTGGASGDLKS) are disordered. Substrate-binding positions include 80–82 (FGK) and 100–102 (YTF). Residues 130–235 (TFNFVLVNRY…RVNLTFRKIL (106 aa)) enclose the Fe2OG dioxygenase domain. 3 residues coordinate 2-oxoglutarate: asparagine 137, tyrosine 139, and histidine 149. Positions 149 and 151 each coordinate Fe cation. Aspartate 152 lines the substrate pocket. 2-oxoglutarate-binding residues include histidine 214, arginine 226, threonine 230, and arginine 232. Histidine 214 contacts Fe cation.

This sequence belongs to the alkB family. Interacts with PCNA homotrimer; this interaction is enhanced during the S-phase of the cell cycle. Interacts with nucleolar proteins NCL, UBTF and NPM1. Interacts with XRCC5-XRCC6 heterodimer. Fe(2+) serves as cofactor. Detected in liver, testis and kidney (at protein level). Detected in heart and testis.

The protein localises to the nucleus. It is found in the nucleolus. It localises to the nucleoplasm. The enzyme catalyses a methylated nucleobase within DNA + 2-oxoglutarate + O2 = a nucleobase within DNA + formaldehyde + succinate + CO2. It catalyses the reaction an N(1)-methyl-2'-deoxyadenosine in double-stranded DNA + 2-oxoglutarate + O2 = a 2'-deoxyadenosine in double-stranded DNA + formaldehyde + succinate + CO2 + H(+). It carries out the reaction an N(1)-methyl-2'-deoxyadenosine in single-stranded DNA + 2-oxoglutarate + O2 = a 2'-deoxyadenosine in single-stranded DNA + formaldehyde + succinate + CO2 + H(+). The catalysed reaction is an N(3)-methyl-2'-deoxycytidine in double-stranded DNA + 2-oxoglutarate + O2 = a 2'-deoxycytidine in double-stranded DNA + formaldehyde + succinate + CO2 + H(+). The enzyme catalyses an N(3)-methyl-2'-deoxycytidine in single-stranded DNA + 2-oxoglutarate + O2 = a 2'-deoxycytidine in single-stranded DNA + formaldehyde + succinate + CO2 + H(+). It catalyses the reaction a 1,N(6)-etheno-2'-deoxyadenosine in double-stranded DNA + 2-oxoglutarate + O2 + H2O = a 2'-deoxyadenosine in double-stranded DNA + glyoxal + succinate + CO2. It carries out the reaction a 1,N(6)-etheno-2'-deoxyadenosine in single-stranded DNA + 2-oxoglutarate + O2 + H2O = a 2'-deoxyadenosine in single-stranded DNA + glyoxal + succinate + CO2. The catalysed reaction is a 3,N(4)-etheno-2'-deoxycytidine in double-stranded DNA + 2-oxoglutarate + O2 + H2O = a 2'-deoxycytidine in double-stranded DNA + glyoxal + succinate + CO2. The enzyme catalyses a 3,N(4)-etheno-2'-deoxycytidine in single-stranded DNA + 2-oxoglutarate + O2 + H2O = a 2'-deoxycytidine in single-stranded DNA + glyoxal + succinate + CO2. It catalyses the reaction a 1,N(2)-etheno-2'-deoxyguanosine in double-stranded DNA + 2-oxoglutarate + O2 + H2O = a 2'-deoxyguanosine in double-stranded DNA + glyoxal + succinate + CO2. With respect to regulation, activated by magnesium ions. Its function is as follows. Dioxygenase that repairs alkylated nucleic acid bases by direct reversal oxidative dealkylation. Can process both double-stranded (ds) and single-stranded (ss) DNA substrates, with a strong preference for dsDNA. Uses molecular oxygen, 2-oxoglutarate and iron as cofactors to oxidize the alkyl groups that are subsequently released as aldehydes, regenerating the undamaged bases. Probes the base pair stability, locates a weakened base pair and flips the damaged base to accommodate the lesion in its active site for efficient catalysis. Repairs monoalkylated bases, specifically N1-methyladenine and N3-methylcytosine, as well as higher order alkyl adducts such as bases modified with exocyclic bridged adducts known as etheno adducts including 1,N6-ethenoadenine, 3,N4-ethenocytosine and 1,N2-ethenoguanine. Acts as a gatekeeper of genomic integrity under alkylation stress. Efficiently repairs alkylated lesions in ribosomal DNA (rDNA). These lesions can cause ss- and dsDNA strand breaks that severely impair rDNA transcription. In a response mechanism to DNA damage, associates with PCNA at replication forks to repair alkylated adducts prior to replication. The protein is DNA oxidative demethylase ALKBH2 (Alkbh2) of Mus musculus (Mouse).